We begin with the raw amino-acid sequence, 512 residues long: Cytoplasmic tRNA 2-thiolation protein 2-A (512 aa).

Belongs to the CTU2/NCS2 family.

The protein resides in the cytoplasm. The protein operates within tRNA modification; 5-methoxycarbonylmethyl-2-thiouridine-tRNA biosynthesis. Plays a central role in 2-thiolation of mcm(5)S(2)U at tRNA wobble positions of tRNA(Lys), tRNA(Glu) and tRNA(Gln). May act by forming a heterodimer with ctu1/atpbd3 that ligates sulfur from thiocarboxylated urm1 onto the uridine of tRNAs at wobble position. This is Cytoplasmic tRNA 2-thiolation protein 2-A (ctu2-a) from Xenopus laevis (African clawed frog).